Consider the following 64-residue polypeptide: Large ribosomal subunit protein bL35 (64 aa).

The segment covering 1–14 (MKQKTHKGTAKRVK) has biased composition (basic residues). Residues 1–50 (MKQKTHKGTAKRVKITGSGKLRREQANRRHLLEGKPSKRTRRLKGTEDVA) are disordered. The segment covering 21-36 (LRREQANRRHLLEGKP) has biased composition (basic and acidic residues).

This sequence belongs to the bacterial ribosomal protein bL35 family.

This is Large ribosomal subunit protein bL35 from Corynebacterium diphtheriae (strain ATCC 700971 / NCTC 13129 / Biotype gravis).